Consider the following 137-residue polypeptide: Proofreading thioesterase EntH (137 aa).

Glu-63 functions as the Nucleophile or proton acceptor in the catalytic mechanism.

The protein belongs to the thioesterase PaaI family. As to quaternary structure, homotetramer. Dimer of dimers. Interacts specifically with the aryl carrier protein (ArCP) domain of EntB.

The protein resides in the cytoplasm. Its pathway is siderophore biosynthesis; enterobactin biosynthesis. In terms of biological role, required for optimal enterobactin synthesis. Acts as a proofreading enzyme that prevents EntB misacylation by hydrolyzing the thioester bound existing between EntB and wrongly charged molecules. The polypeptide is Proofreading thioesterase EntH (Salmonella paratyphi B (strain ATCC BAA-1250 / SPB7)).